A 1969-amino-acid chain; its full sequence is MEKSEQTNSFESSNNNNNNIDSNINNNLENNNNKNNNNNNNNNNNNNNNNNNIENSIDKNNKEDNSLVGVNSHRKHRTRLKSKKGNKHETKKEIDYKDLLIKLPHNAVSNFNSLENESSDNLTPPPPINSSPLPLPLSLPLPLSLPLPLPLPLPLPLPLPPNKENIEINMEDIIIPENKIKNKNNNNNIDINNNNNNNNEKQTSIIEMEDLDKLKQPKINEGSTGKKGKSHFFSFLQRGDKTNSSILKSSEQPTHKKTKTNINTPPDYPIHYFGHHKRFSSSSDEGSDNSKSQHSSVNTPTLSRHNIDSLPESQQSQKQSQQQSQQPQQQNKTKQIQQTILNNNNDNLNEVTPIKKSSLPTLEVSPIQSNIINNQTTEKHNSGGFTALTSASAMNHQNQRRYREHHQINHQQQQQQHHRHYHHHINSGGSSGSSDKFDYVSATGLSTKNGFNPKSLDVDHFPISDKRNNINIQAPSTPVQSRNYPLFTTQSPKNANSASKSKNKLKNLKRKIASSITGNNPSGISSSAFNHSFSSWNNNNSVYTGGNSGGGSGGGGSGGGGGGGGGGGGIGTPSSFLDDNNNLNNGENFKNSNSYNNNNGSNRSISHDEWLRQFYHKHLERYEKTKAVDYLIIKPWNFISWILRPSRIANYQSKILYRRAYILNFLNLVLFVVYLLSTILSSNEWFIFAPGILLSVIYFFLGKINNKMYLIAFLTISTAVAINITSIIYDLTHTRPTDKLIFSWDLLVMIMVPLLFPSIVYSIVILISVAVTYIGLGIYVQSSHNFYLLDAYDSFGELLRSIIIVFVILMFYTILSSVDLKEIERKESRIQSLFRISNEALVVHKDGLITDANPAFESMFQIKLQDLLYPIQSGIWEFLPALEGMFEPGASKLFDNPDMGVIETTGIDSSGRTFQVEVRTNKATYDGEPVDVISIIDITGRKQLMEADYALRKAEAANEAKVIFLTTVSHELRTPINGVLASADILERTTLDSTQKEFLNCIKLSGNYLLDLINDILDYSKIEAGKMEIIKYDFSILKMLDNSIRIVSKNIYEKGLDLCIFIDPNVPVIVNGDQRRIKQILLNFLSNSIKFTNHGQIIIRVKLESDDSTHSLIKFDVEDSGIGIKTEHLNQLFASFSQIDSGNSRKYQGTGLGLSISKRLCKMMGGDVKVKSEFGVGSTFSFTIPCGIPNTTTRFSLQSLGSAIYMGEDIQGINKPIGKKKYGASGVVGIVIDSNKYTRKSISQYFAILKISCVDFENKKEFENYLSTLATVDQTTNPQVYLVITSIIDINQLTTNGLPRDRIYHWILMESPNEERKLPLEFENRFVKPAQFADIVRCLYKIDSINFFIEQMAGSPYKASKDLQSGGSSNESGDGGRSLSGGGGGVGSNGNGNGGGGLDSNISPSELSSSEHQLISTPLSDVNEFEDINLINQSLSGLGPSAKVLNSTYFNGLSQSSKIYNNNNRNGVGIGNHHHDHYYQHRHHHSLPPEEIDYDESPFLFLNKPIRKVYHSQPSTPVTNGIALMDSSSKSPSIPSSSSASASALSPNSRHSNELGNGKTTQSFVFSPTSRKFSLNDSFNPSISTIVLPQVSYSPSMQGGNFPINMESVYKKIESHNNNFKRSESKPSTPTFLSNQPSPATSNSPQLLQSPTTSTTGSINLSPHRSPNIRLPLEVRSGSLSSLKPLREDEELESISDDHTSHLKGSSHSINQQIPSTIQQQQQQQQQQQQQQQQQQQQQQQQQQQQQQQQQQQQQKPQQQQQKPTTTTTTTSTQLPQNIEKTTTTTTTSTTKPTATSSSSSSSKTTKTQQQQHHPTTTTTTKSEKIEKTAAATTSEKIEKILLVEDNFVNVKIFSKLLKDSGYIFDVAHNGVEAVECVKKGAYDLILMDCQMPEMDGFEATTAIRELEKSNLIESPPSKKHSHVVIVALTANSGYKDKQKCLSVGMNDFLQKPIKTSDILIQMIKKHLN.

Residues 1–10 (MEKSEQTNSF) are compositionally biased toward polar residues. Disordered stretches follow at residues 1-91 (MEKS…HETK), 218-335 (KINE…KTKQ), 412-436 (QQQQ…SSDK), 468-505 (NNIN…KNKL), and 551-598 (GSGG…YNNN). Residues 11-55 (ESSNNNNNNIDSNINNNLENNNNKNNNNNNNNNNNNNNNNNNIEN) show a composition bias toward low complexity. The segment covering 56 to 65 (SIDKNNKEDN) has biased composition (basic and acidic residues). Residues 72-86 (SHRKHRTRLKSKKGN) are compositionally biased toward basic residues. The span at 242 to 252 (TNSSILKSSEQ) shows a compositional bias: polar residues. Positions 280–292 (SSSSDEGSDNSKS) are enriched in low complexity. Residues 293–304 (QHSSVNTPTLSR) show a composition bias toward polar residues. Positions 313–335 (SQQSQKQSQQQSQQPQQQNKTKQ) are enriched in low complexity. Over residues 416–425 (QHHRHYHHHI) the composition is skewed to basic residues. Residues 469–492 (NINIQAPSTPVQSRNYPLFTTQSP) show a composition bias toward polar residues. Positions 551–571 (GSGGGGSGGGGGGGGGGGGIG) are enriched in gly residues. Residues 574–598 (SSFLDDNNNLNNGENFKNSNSYNNN) show a composition bias toward low complexity. A run of 5 helical transmembrane segments spans residues 660–680 (AYIL…STIL), 684–704 (EWFI…LGKI), 708–728 (MYLI…TSII), 747–767 (LVMI…VILI), and 795–815 (FGEL…YTIL). The Histidine kinase domain occupies 967 to 1188 (TVSHELRTPI…TFSFTIPCGI (222 aa)). Residue H970 is modified to Phosphohistidine; by autocatalysis. 4 disordered regions span residues 1359-1415 (ASKD…HQLI), 1521-1563 (GIAL…TTQS), 1617-1709 (NNNF…SSHS), and 1755-1832 (QKPQ…TAAA). The span at 1373 to 1398 (GDGGRSLSGGGGGVGSNGNGNGGGGL) shows a compositional bias: gly residues. 2 stretches are compositionally biased toward low complexity: residues 1399–1410 (DSNISPSELSSS) and 1527–1549 (SSSK…SPNS). Polar residues-rich tracts occupy residues 1554 to 1563 (ELGNGKTTQS) and 1626 to 1665 (KPST…SPHR). 2 stretches are compositionally biased toward low complexity: residues 1755-1774 (QKPQ…TSTQ) and 1781-1821 (KTTT…TTTT). The Response regulatory domain maps to 1840–1967 (KILLVEDNFV…DILIQMIKKH (128 aa)). At D1889 the chain carries 4-aspartylphosphate.

The protein resides in the membrane. The enzyme catalyses ATP + protein L-histidine = ADP + protein N-phospho-L-histidine.. Functionally, acts in the cytokinin signal transduction pathway that regulates spore germination. Required for the maintenance of spore dormancy. Does not appear to act as a cytokinin receptor. Probably undergoes ATP-dependent autophosphorylation at a conserved histidine residue in the kinase core, which is followed by transfer of the phosphoryl group to a conserved aspartate residue in the receiver domain. This is Hybrid signal transduction histidine kinase B (dhkB) from Dictyostelium discoideum (Social amoeba).